We begin with the raw amino-acid sequence, 423 residues long: Putative competence-damage inducible protein (423 aa).

This sequence belongs to the CinA family.

The polypeptide is Putative competence-damage inducible protein (Streptococcus equi subsp. zooepidemicus (strain H70)).